Consider the following 107-residue polypeptide: Glutaredoxin 4 (107 aa).

The 103-residue stretch at 4-106 (LDKIKKQISE…TLLAEVAAKH (103 aa)) folds into the Glutaredoxin domain. Residue lysine 21 participates in glutathione binding. Residue cysteine 29 participates in [2Fe-2S] cluster binding. Glutathione-binding positions include arginine 58, phenylalanine 70, and 83–84 (CD).

Belongs to the glutaredoxin family. Monothiol subfamily. In terms of assembly, homodimer.

The protein resides in the cytoplasm. Functionally, monothiol glutaredoxin involved in the biogenesis of iron-sulfur clusters. The chain is Glutaredoxin 4 (grxD) from Haemophilus influenzae (strain 86-028NP).